The primary structure comprises 469 residues: Ribosomal protein uS12 methylthiotransferase RimO (469 aa).

Positions proline 17–proline 132 constitute an MTTase N-terminal domain. Residues cysteine 26, cysteine 62, cysteine 91, cysteine 167, cysteine 171, and cysteine 174 each contribute to the [4Fe-4S] cluster site. Positions leucine 153–lysine 395 constitute a Radical SAM core domain. A TRAM domain is found at glutamine 397–valine 469.

It belongs to the methylthiotransferase family. RimO subfamily. It depends on [4Fe-4S] cluster as a cofactor.

Its subcellular location is the cytoplasm. The enzyme catalyses L-aspartate(89)-[ribosomal protein uS12]-hydrogen + (sulfur carrier)-SH + AH2 + 2 S-adenosyl-L-methionine = 3-methylsulfanyl-L-aspartate(89)-[ribosomal protein uS12]-hydrogen + (sulfur carrier)-H + 5'-deoxyadenosine + L-methionine + A + S-adenosyl-L-homocysteine + 2 H(+). In terms of biological role, catalyzes the methylthiolation of an aspartic acid residue of ribosomal protein uS12. This chain is Ribosomal protein uS12 methylthiotransferase RimO, found in Polaromonas sp. (strain JS666 / ATCC BAA-500).